The sequence spans 544 residues: Prolyl 4-hydroxylase subunit alpha-3 (544 aa).

An N-terminal signal peptide occupies residues 1–24; that stretch reads MGPGARLAALLVLLKLGVGDPAAA. A TPR repeat occupies 227–260; that stretch reads EDALDYLAFACYQVGNVSCALSLSREFLVYSPDN. An N-linked (GlcNAc...) asparagine glycan is attached at asparagine 242. In terms of domain architecture, Fe2OG dioxygenase spans 422–529; the sequence is YAEYLQVVNY…KWVANKWIHE (108 aa). 2 residues coordinate Fe cation: histidine 440 and aspartate 442. Asparagine 482 is a glycosylation site (N-linked (GlcNAc...) asparagine). Fe cation is bound at residue histidine 510. Lysine 520 contacts 2-oxoglutarate.

The protein belongs to the P4HA family. In terms of assembly, heterotetramer of two alpha-3 chains and two beta chains (the beta chain is the multi-functional PDI). Fe(2+) is required as a cofactor. The cofactor is L-ascorbate. Post-translationally, N-glycosylation plays no role in the catalytic activity.

It localises to the endoplasmic reticulum lumen. It catalyses the reaction L-prolyl-[collagen] + 2-oxoglutarate + O2 = trans-4-hydroxy-L-prolyl-[collagen] + succinate + CO2. In terms of biological role, catalyzes the post-translational formation of 4-hydroxyproline in -Xaa-Pro-Gly- sequences in collagens and other proteins. This chain is Prolyl 4-hydroxylase subunit alpha-3 (P4ha3), found in Rattus norvegicus (Rat).